Consider the following 661-residue polypeptide: Coagulation factor XIII B chain (661 aa).

The N-terminal stretch at 1–20 (MRLKNLTFIIILIISGELYA) is a signal peptide. 10 consecutive Sushi domains span residues 24 to 88 (PCGF…PRCF), 89 to 148 (KKCT…TCRK), 151 to 210 (ETCL…KCTK), 211 to 269 (LKCS…VCEG), 272 to 329 (NRCP…KCIE), 334 to 391 (VACE…ECVE), 394 to 452 (ENCK…VCLE), 453 to 516 (PCTV…PLCT), 522 to 580 (GMCT…LCLE), and 581 to 647 (PCTL…PRCI). 20 disulfide bridges follow: cysteine 25–cysteine 76, cysteine 59–cysteine 87, cysteine 91–cysteine 135, cysteine 118–cysteine 146, cysteine 153–cysteine 197, cysteine 180–cysteine 208, cysteine 213–cysteine 255, cysteine 241–cysteine 267, cysteine 274–cysteine 316, cysteine 302–cysteine 327, cysteine 336–cysteine 378, cysteine 364–cysteine 389, cysteine 396–cysteine 439, cysteine 425–cysteine 450, cysteine 454–cysteine 505, cysteine 486–cysteine 515, cysteine 524–cysteine 567, cysteine 553–cysteine 578, cysteine 582–cysteine 636, and cysteine 616–cysteine 646. A glycan (N-linked (GlcNAc...) asparagine) is linked at asparagine 162. Asparagine 545 is a glycosylation site (N-linked (GlcNAc...) asparagine). The Cell attachment site signature appears at 617–619 (RGD).

As to quaternary structure, tetramer of two A chains (F13A1) and two B (F13B) chains.

The protein localises to the secreted. Its function is as follows. The B chain of factor XIII is not catalytically active, but is thought to stabilize the A subunits and regulate the rate of transglutaminase formation by thrombin. In Homo sapiens (Human), this protein is Coagulation factor XIII B chain (F13B).